We begin with the raw amino-acid sequence, 394 residues long: HORMA domain-containing protein 1 (394 aa).

The HORMA domain maps to 24–226 (HQSLVLVKRL…TPFHIFKVKV (203 aa)). A compositionally biased stretch (basic and acidic residues) spans 253–282 (ILRDKDVEDEQEHYTSDDLDIETKMEEQEK). The interval 253 to 394 (ILRDKDVEDE…RKFSEPKEHI (142 aa)) is disordered. The span at 288-300 (ELEEPSLVCEEDE) shows a compositional bias: acidic residues. Composition is skewed to polar residues over residues 310 to 324 (LSIS…VNKT) and 343 to 352 (KMANGNQPVK). The span at 362-374 (QHESGRIVLHHFD) shows a compositional bias: basic and acidic residues. Phosphoserine is present on serine 376. The Nuclear localization signal motif lies at 383 to 386 (KRRK).

In terms of assembly, interacts with HORMAD2. Interacts with IHO1. In terms of processing, phosphorylated at Ser-377 in a SPO11-dependent manner. As to expression, testis-specific. Over-expressed in carcinomas.

The protein localises to the nucleus. It is found in the chromosome. Its function is as follows. Plays a key role in meiotic progression. Regulates 3 different functions during meiosis: ensures that sufficient numbers of processed DNA double-strand breaks (DSBs) are available for successful homology search by increasing the steady-state numbers of single-stranded DSB ends. Promotes synaptonemal-complex formation independently of its role in homology search. Plays a key role in the male mid-pachytene checkpoint and the female meiotic prophase checkpoint: required for efficient build-up of ATR activity on unsynapsed chromosome regions, a process believed to form the basis of meiotic silencing of unsynapsed chromatin (MSUC) and meiotic prophase quality control in both sexes. The polypeptide is HORMA domain-containing protein 1 (Homo sapiens (Human)).